Consider the following 1019-residue polypeptide: Collagen alpha-1(VI) chain (1019 aa).

Residues 1–19 (MGLHDSFLALLLLLGGAWA) form the signal peptide. Residues 37 to 233 (DLFFVLDTSE…LDVEETINNI (197 aa)) enclose the VWFA 1 domain. N-linked (GlcNAc...) asparagine glycosylation occurs at Asn212. Positions 248–588 (FECHPPRGPP…GPPGPVGPPG (341 aa)) are disordered. Pro residues predominate over residues 253–262 (PRGPPGPPGD). 2 stretches are compositionally biased toward basic and acidic residues: residues 299 to 332 (KGDKGSRGEKGSRGAKGAKGEKGKRGIDGIDGMK) and 370 to 380 (GKGEPGEDGKP). Over residues 427 to 436 (ERGPPGSPGD) the composition is skewed to low complexity. The Cell attachment site signature appears at 476-478 (RGD). The N-linked (GlcNAc...) asparagine glycan is linked to Asn514. Positions 529-531 (RGD) match the Cell attachment site motif. Asn535 carries an N-linked (GlcNAc...) asparagine glycan. A compositionally biased stretch (pro residues) spans 577–588 (RPGPPGPVGPPG). VWFA domains lie at 613–800 (DLLF…LQNI) and 824–1012 (DIML…YQTV). N-linked (GlcNAc...) asparagine glycosylation is found at Asn799 and Asn887.

Belongs to the type VI collagen family. In terms of assembly, trimers composed of three different chains: alpha 1(VI), alpha 2(VI), and alpha 3(VI). Post-translationally, prolines at the third position of the tripeptide repeating unit (G-X-Y) are hydroxylated in some or all of the chains.

Its subcellular location is the secreted. It localises to the extracellular space. It is found in the extracellular matrix. Functionally, collagen VI acts as a cell-binding protein. The protein is Collagen alpha-1(VI) chain (COL6A1) of Gallus gallus (Chicken).